The chain runs to 484 residues: MECVRSGALDLGRSGNFLGKSGSTTSCGKVRCSTNLAGSTKCEQNLHGKAKPLLLSASGKARGTSGLVHRSPVLKHQHHLSVRSTSTDVCTTFDEDVKGVSSHAVEEKVGVLLLNLGGPETLNDVQPFLFNLFADPDIIRLPRLFRFLQRPLAKLISTFRAPKSNEGYASIGGGSPLRKITDEQANALKVALKSKNLEADIYVGMRYWYPFTEEAIDQIKKDKITKLVVLPLYPQYSISTSGSSIRVLQNIVKEDPYFAGLPISIIESWYQREGYVKSMADLIEKELSVFSNPEEVMIFFSAHGVPLTYVKDAGDPYRDQMEDCIALIMEELKSRGTLNDHTLAYQSRVGPVQWLKPYTDEVLVELGQKGVKSLLAVPVSFVSEHIETLEEIDMEYRELALESGIENWGRVPALGCTSSFISDLADAVVEALPSASAMATRKVKDTDSDMDMMHYLTKMFLGSVLAFFLLLSPRLVSAFRNTLQ.

Belongs to the ferrochelatase family.

The protein resides in the plastid. It is found in the chloroplast. The enzyme catalyses heme b + 2 H(+) = protoporphyrin IX + Fe(2+). It functions in the pathway porphyrin-containing compound metabolism; protoheme biosynthesis; protoheme from protoporphyrin-IX: step 1/1. In terms of biological role, catalyzes the ferrous insertion into protoporphyrin IX. This chain is Ferrochelatase-2, chloroplastic (HEMH), found in Hordeum vulgare (Barley).